A 526-amino-acid chain; its full sequence is METDAIDGYITCDNELSPEGEHANMAIDLTSSTPNGQHASPSHMTSTNSVKLEMQSDEECDRQPLSREDEIRGHDEGSSLEEPLIESSEVADNRKVQDLQGEGGIRLPNGKLKCDVCGMVCIGPNVLMVHKRSHTGERPFHCNQCGASFTQKGNLLRHIKLHSGEKPFKCPFCSYACRRRDALTGHLRTHSVGKPHKCNYCGRSYKQRSSLEEHKERCHNYLQNVSMEAAGQVMSHHVPPMEDCKEQEPIMDNNISLVPFERPAVIEKLTANMGKRKSSTPQKFVGEKLMRFSYPDIHFDMNLTYEKEAELMQSHMMDQAINNAITYLGAEALHPLMQHAPSTIAEVAPVISSAYSQVYHPNRIERPISRETSDSHENNMDGPISLIRPKSRPQEREASPSNSCLDSTDSESSHDDRQSYQGNPALNPKRKQSPAYMKEDVKALDATKAPKGSLKDIYKVFNGEGEQIRAFKCEHCRVLFLDHVMYTIHMGCHGYRDPLECNICGYRSQDRYEFSSHIVRGEHTFH.

Positions 28–94 (DLTSSTPNGQ…IESSEVADNR (67 aa)) are disordered. Residues 29 to 50 (LTSSTPNGQHASPSHMTSTNSV) show a composition bias toward polar residues. Ser56 is subject to Phosphoserine. A compositionally biased stretch (basic and acidic residues) spans 61–77 (DRQPLSREDEIRGHDEG). Phosphoserine occurs at positions 78 and 79. A Glycyl lysine isopeptide (Lys-Gly) (interchain with G-Cter in SUMO2) cross-link involves residue Lys95. C2H2-type zinc fingers lie at residues 112–134 (LKCDVCGMVCIGPNVLMVHKRSH), 140–162 (FHCNQCGASFTQKGNLLRHIKLH), 168–190 (FKCPFCSYACRRRDALTGHLRTH), and 196–219 (HKCNYCGRSYKQRSSLEEHKERCH). Lys288 is modified (N6-acetyllysine). Positions 368 to 379 (ISRETSDSHENN) are enriched in basic and acidic residues. Positions 368–435 (ISRETSDSHE…LNPKRKQSPA (68 aa)) are disordered. Glycyl lysine isopeptide (Lys-Gly) (interchain with G-Cter in SUMO2) cross-links involve residues Lys442 and Lys448. 2 C2H2-type zinc fingers span residues 471–493 (FKCEHCRVLFLDHVMYTIHMGCH) and 499–523 (LECNICGYRSQDRYEFSSHIVRGEH).

Belongs to the Ikaros C2H2-type zinc-finger protein family. In terms of assembly, can form homodimers. Interacts with IKZF4 and IKZF5. In terms of tissue distribution, expressed in outer hair cells (OHC) of the organ of Corti. Abundant in thymus, low expression in bone marrow and brain and no detectable expression in spleen, liver, kidney or muscle. Expressed in T-cells.

The protein resides in the nucleus. In terms of biological role, transcriptional regulator required for outer hair cells (OHC) maturation and, consequently, for hearing. The chain is Zinc finger protein Helios (Ikzf2) from Mus musculus (Mouse).